We begin with the raw amino-acid sequence, 105 residues long: Heat shock protein HspQ (105 aa).

The disordered stretch occupies residues 75-105 (GEMQEEHPEQPSMDELARSIRQQLQAPRLRN).

It belongs to the HspQ family.

Its subcellular location is the cytoplasm. In terms of biological role, involved in the degradation of certain denaturated proteins, including DnaA, during heat shock stress. This Cronobacter sakazakii (strain ATCC BAA-894) (Enterobacter sakazakii) protein is Heat shock protein HspQ.